A 314-amino-acid chain; its full sequence is uncharacterized protein (314 aa).

The tract at residues 1 to 70 (MAGNSQRRGA…QGRHKKTDDT (70 aa)) is disordered. The segment covering 43–65 (QRPHHPAGKRAAKAARQAQGRHK) has biased composition (basic residues). Residues Gly265, Ile285, and Leu294 each contribute to the S-adenosyl-L-methionine site.

It belongs to the class IV-like SAM-binding methyltransferase superfamily. RNA methyltransferase TrmH family.

This is an uncharacterized protein from Mycolicibacterium vanbaalenii (strain DSM 7251 / JCM 13017 / BCRC 16820 / KCTC 9966 / NRRL B-24157 / PYR-1) (Mycobacterium vanbaalenii).